A 175-amino-acid chain; its full sequence is Gamma-crystallin B (175 aa).

Beta/gamma crystallin 'Greek key' domains follow at residues 2 to 40 and 41 to 83; these read GKIT…RVDS and GCWM…CLIP. A connecting peptide region spans residues 84-88; it reads QHSGT. Beta/gamma crystallin 'Greek key' domains lie at 89–129 and 130–172; these read YRMR…NVME and GCWV…RRVM.

Belongs to the beta/gamma-crystallin family.

In terms of biological role, crystallins are the dominant structural components of the vertebrate eye lens. The chain is Gamma-crystallin B (Crygb) from Mus musculus (Mouse).